The sequence spans 484 residues: Protein nucleotidyltransferase YdiU (484 aa).

ATP is bound by residues G81, G83, R84, K103, D115, G116, R166, and R173. D244 serves as the catalytic Proton acceptor. Mg(2+) is bound by residues N245 and D254. D254 is an ATP binding site.

Belongs to the SELO family. Mg(2+) serves as cofactor. The cofactor is Mn(2+).

It catalyses the reaction L-seryl-[protein] + ATP = 3-O-(5'-adenylyl)-L-seryl-[protein] + diphosphate. The catalysed reaction is L-threonyl-[protein] + ATP = 3-O-(5'-adenylyl)-L-threonyl-[protein] + diphosphate. The enzyme catalyses L-tyrosyl-[protein] + ATP = O-(5'-adenylyl)-L-tyrosyl-[protein] + diphosphate. It carries out the reaction L-histidyl-[protein] + UTP = N(tele)-(5'-uridylyl)-L-histidyl-[protein] + diphosphate. It catalyses the reaction L-seryl-[protein] + UTP = O-(5'-uridylyl)-L-seryl-[protein] + diphosphate. The catalysed reaction is L-tyrosyl-[protein] + UTP = O-(5'-uridylyl)-L-tyrosyl-[protein] + diphosphate. Nucleotidyltransferase involved in the post-translational modification of proteins. It can catalyze the addition of adenosine monophosphate (AMP) or uridine monophosphate (UMP) to a protein, resulting in modifications known as AMPylation and UMPylation. The protein is Protein nucleotidyltransferase YdiU of Shewanella baltica (strain OS185).